The sequence spans 505 residues: Actin nucleation-promoting factor WASL (505 aa).

Position 2 is an N-acetylserine (S2). Residues 34–141 enclose the WH1 domain; it reads LGKKCVTMSS…KAVTDLLGRR (108 aa). Disordered stretches follow at residues 138–163 and 184–205; these read LGRRQRKSEKRRDPPNGPNLPMATVD and HTKEKKKGKAKKKRLTKADIGT. The segment covering 186–198 has biased composition (basic residues); the sequence is KEKKKGKAKKKRL. One can recognise a CRIB domain in the interval 203–216; it reads IGTPSNFQHIGHVG. S242 carries the phosphoserine; by TNK2 modification. Y256 is subject to Phosphotyrosine; by FAK1 and TNK2. Residues 266-406 are disordered; that stretch reads EAVKNELRRQ…HQVPTTAGNK (141 aa). Pro residues-rich tracts occupy residues 276-364 and 371-391; these read APPP…PPPS and VAPPPPPPPPPPPGPPPPPGL. The residue at position 307 (R307) is an Omega-N-methylarginine. 2 WH2 domains span residues 405–422 and 433–450; these read NKAALLDQIREGAQLKKV and GRDALLDQIRQGIQLKSV. Residues 476–505 are disordered; sequence QKRSKAIHSSDEDEDEDDEEDFEDDDEWED. A phosphoserine mark is found at S484 and S485. Positions 486–505 are enriched in acidic residues; it reads DEDEDEDDEEDFEDDDEWED.

Binds actin and the Arp2/3 complex. Interacts with CDC42. Interacts with FCHSD1. Interacts with FCHSD2. Binds to SH3 domains of GRB2. Interacts with the C-terminal SH3 domain of DNMBP. Interacts with SNX9. Interacts with the WW domains of PRPF40A/FBP11. Interacts with PTK2/FAK1. Interacts with PACSIN1, PACSIN2 and PACSIN3. Interacts with NOSTRIN. Binds to TNK2. Interacts with SNX33. Interacts with NONO (via second RRM domain); the interaction is direct. Component of a multiprotein complex with NONO and SFPQ; associates with the complex via direct interaction with NONO. In terms of assembly, (Microbial infection) Interacts with E.coli effector protein EspF(U). Identified in a complex containing at least WASL, BAIAP2L1 and E.coli EspF(U). As to quaternary structure, (Microbial infection) Interacts with Shigella flexneri protein IcsA. The interaction with IcsA enhances the affinity of WASL for Arp2/3, thus assembling a tight complex which has maximal activity in actin assembly. Post-translationally, phosphorylation at Ser-242, Tyr-256, Ser-484 and Ser-485 enhances actin polymerization activity.

It localises to the cytoplasm. The protein localises to the cytoskeleton. It is found in the nucleus. Its function is as follows. Regulates actin polymerization by stimulating the actin-nucleating activity of the Arp2/3 complex. Involved in various processes, such as mitosis and cytokinesis, via its role in the regulation of actin polymerization. Together with CDC42, involved in the extension and maintenance of the formation of thin, actin-rich surface projections called filopodia. In addition to its role in the cytoplasm, also plays a role in the nucleus by regulating gene transcription, probably by promoting nuclear actin polymerization. Binds to HSF1/HSTF1 and forms a complex on heat shock promoter elements (HSE) that negatively regulates HSP90 expression. Plays a role in dendrite spine morphogenesis. Decreasing levels of DNMBP (using antisense RNA) alters apical junction morphology in cultured enterocytes, junctions curve instead of being nearly linear. The protein is Actin nucleation-promoting factor WASL (WASL) of Homo sapiens (Human).